A 239-amino-acid polypeptide reads, in one-letter code: uncharacterized protein (239 aa).

The region spanning 13 to 66 (IEYLVDKLNGPSEFARKTGVTLSTITRWRKGEADPSRSNLVKIAEVTGVSIEWL) is the HTH cro/C1-type domain. A DNA-binding region (H-T-H motif) is located at residues 24 to 43 (SEFARKTGVTLSTITRWRKG).

This is an uncharacterized protein from Haemophilus influenzae (strain ATCC 51907 / DSM 11121 / KW20 / Rd).